Reading from the N-terminus, the 465-residue chain is UDP-N-acetylmuramate--L-alanine ligase (465 aa).

112-118 contacts ATP; the sequence is GTHGKTT.

The protein belongs to the MurCDEF family.

The protein resides in the cytoplasm. The enzyme catalyses UDP-N-acetyl-alpha-D-muramate + L-alanine + ATP = UDP-N-acetyl-alpha-D-muramoyl-L-alanine + ADP + phosphate + H(+). It participates in cell wall biogenesis; peptidoglycan biosynthesis. Functionally, cell wall formation. In Burkholderia vietnamiensis (strain G4 / LMG 22486) (Burkholderia cepacia (strain R1808)), this protein is UDP-N-acetylmuramate--L-alanine ligase.